The chain runs to 536 residues: Glycine--tRNA ligase (536 aa).

The tract at residues 56–67 is insert; that stretch reads LVSPAGAPSTFE. The substrate site is built by Arg-106 and Glu-213. ATP contacts are provided by residues 245–247, 255–260, and 333–334; these read RNE, FRSREF, and EL. 260 to 264 is a substrate binding site; the sequence is FEQME. The segment at 350–372 is insert; that stretch reads EGKLDPATNPMTVELNEHGKPKH. 396 to 400 contacts substrate; it reads EPSAG. 400 to 403 contacts ATP; the sequence is GADR.

The protein belongs to the class-II aminoacyl-tRNA synthetase family. Homodimer.

Its subcellular location is the cytoplasm. It catalyses the reaction tRNA(Gly) + glycine + ATP = glycyl-tRNA(Gly) + AMP + diphosphate. In terms of biological role, catalyzes the attachment of glycine to tRNA(Gly). This chain is Glycine--tRNA ligase, found in Rhodopirellula baltica (strain DSM 10527 / NCIMB 13988 / SH1).